We begin with the raw amino-acid sequence, 360 residues long: MLLWLGEYLTQFYSAFNVFSYLTFRAIISTLTALFISLYFGPKLIRYLQKMQIGQTVRDDGPESHLSKSGTPTMGGLLILASIVISVLLWADLSNIYVWVVLFVIVSFGIVGFVDDYRKVIRKDANGLIARWKYFWQTVIGLSTALFLYFIAQGPNETALLVPFVKELLPQLGIFYVVMSYFVIVGTSNAVNLTDGLDGLAIVPTIMVAGAFALFAYVTGHVNFSAYLNIPHIALTSELVIVCTAIVGAGLGFLWFNTYPAQVFMGDVGSLALGAALGVIAILVRQELVLFIMGGVFVMETVSVILQVGSYKMRGQRIFRMAPIHHHYELKGWPEPRVIVRFWIISLILVLIGLATLKLR.

The next 10 membrane-spanning stretches (helical) occupy residues 18 to 38 (VFSYLTFRAIISTLTALFISL), 73 to 93 (TMGGLLILASIVISVLLWADL), 94 to 114 (SNIYVWVVLFVIVSFGIVGFV), 134 to 154 (YFWQTVIGLSTALFLYFIAQG), 168 to 188 (LLPQLGIFYVVMSYFVIVGTS), 199 to 219 (GLAIVPTIMVAGAFALFAYVT), 239 to 259 (LVIVCTAIVGAGLGFLWFNTY), 263 to 283 (VFMGDVGSLALGAALGVIAIL), 288 to 308 (LVLFIMGGVFVMETVSVILQV), and 338 to 358 (VIVRFWIISLILVLIGLATLK).

This sequence belongs to the glycosyltransferase 4 family. MraY subfamily. It depends on Mg(2+) as a cofactor.

It localises to the cell inner membrane. The catalysed reaction is UDP-N-acetyl-alpha-D-muramoyl-L-alanyl-gamma-D-glutamyl-meso-2,6-diaminopimeloyl-D-alanyl-D-alanine + di-trans,octa-cis-undecaprenyl phosphate = di-trans,octa-cis-undecaprenyl diphospho-N-acetyl-alpha-D-muramoyl-L-alanyl-D-glutamyl-meso-2,6-diaminopimeloyl-D-alanyl-D-alanine + UMP. Its pathway is cell wall biogenesis; peptidoglycan biosynthesis. In terms of biological role, catalyzes the initial step of the lipid cycle reactions in the biosynthesis of the cell wall peptidoglycan: transfers peptidoglycan precursor phospho-MurNAc-pentapeptide from UDP-MurNAc-pentapeptide onto the lipid carrier undecaprenyl phosphate, yielding undecaprenyl-pyrophosphoryl-MurNAc-pentapeptide, known as lipid I. The protein is Phospho-N-acetylmuramoyl-pentapeptide-transferase of Colwellia psychrerythraea (strain 34H / ATCC BAA-681) (Vibrio psychroerythus).